Reading from the N-terminus, the 591-residue chain is UvrABC system protein C (591 aa).

Residues aspartate 14–isoleucine 91 form the GIY-YIG domain. One can recognise a UVR domain in the interval aspartate 196 to leucine 231.

The protein belongs to the UvrC family. Interacts with UvrB in an incision complex.

Its subcellular location is the cytoplasm. Its function is as follows. The UvrABC repair system catalyzes the recognition and processing of DNA lesions. UvrC both incises the 5' and 3' sides of the lesion. The N-terminal half is responsible for the 3' incision and the C-terminal half is responsible for the 5' incision. The sequence is that of UvrABC system protein C from Streptococcus uberis (strain ATCC BAA-854 / 0140J).